Reading from the N-terminus, the 401-residue chain is Nodal homolog 3-B (401 aa).

The signal sequence occupies residues 1-18 (MAFLSLFLCLVFSSPLMA). A propeptide spanning residues 19 to 274 (MPPALQGRKA…KVNGFRRLRR (256 aa)) is cleaved from the precursor. Asn-168, Asn-337, and Asn-344 each carry an N-linked (GlcNAc...) asparagine glycan. 2 cysteine pairs are disulfide-bonded: Cys-299/Cys-365 and Cys-328/Cys-396.

It belongs to the TGF-beta family. In terms of assembly, monomer. The propeptide region interacts with bmp4 in a non-covalent manner. Expressed in the dorsal marginal region of late blastula, becoming restricted to the Spemann organizer at the early gastrula stage.

Its subcellular location is the secreted. In terms of biological role, exhibits mesoderm-dorsalizing activity and neural-inducing activity, but lacks mesoderm-inducing activity. Regulates the expression of specific mesodermal and neural genes. Induces convergent extension movements at the embryonic midline by activating the fgf signaling pathway to induce t/bra expression in the organizer region. Acts with wnt11 to induce Spemann organizer cells and induce axis formation. The unprocessed protein antagonizes bmp-signaling. This is Nodal homolog 3-B from Xenopus tropicalis (Western clawed frog).